Reading from the N-terminus, the 90-residue chain is Phosphocarrier protein HPr (90 aa).

One can recognise an HPr domain in the interval 1–89 (MPALEITIIN…ELINNRFDEG (89 aa)). The active-site Pros-phosphohistidine intermediate is histidine 15.

It belongs to the HPr family.

The protein localises to the cytoplasm. In terms of biological role, general (non sugar-specific) component of the phosphoenolpyruvate-dependent sugar phosphotransferase system (sugar PTS). This major carbohydrate active-transport system catalyzes the phosphorylation of incoming sugar substrates concomitantly with their translocation across the cell membrane. The phosphoryl group from phosphoenolpyruvate (PEP) is transferred to the phosphoryl carrier protein HPr by enzyme I. Phospho-HPr then transfers it to the PTS EIIA domain. This chain is Phosphocarrier protein HPr (ptsH), found in Pseudomonas aeruginosa (strain ATCC 15692 / DSM 22644 / CIP 104116 / JCM 14847 / LMG 12228 / 1C / PRS 101 / PAO1).